A 65-amino-acid polypeptide reads, in one-letter code: Large ribosomal subunit protein uL29 (65 aa).

This sequence belongs to the universal ribosomal protein uL29 family.

The sequence is that of Large ribosomal subunit protein uL29 from Acinetobacter baylyi (strain ATCC 33305 / BD413 / ADP1).